The following is a 295-amino-acid chain: Xyloglucan endotransglucosylase/hydrolase (295 aa).

A signal peptide spans 1–23 (MAVSSTPWALVALFLMASSTVMA). Positions 25-222 (PPRKAIDVPF…WANAPFIASY (198 aa)) constitute a GH16 domain. E108 (nucleophile) is an active-site residue. Residue E112 is the Proton donor of the active site. Residue E112 participates in xyloglucan binding. A glycan (N-linked (GlcNAc...) asparagine) is linked at N116. Residues 125–127 (QTN), 135–137 (NRE), 201–202 (DW), and G206 contribute to the xyloglucan site. 2 disulfides stabilise this stretch: C230/C239 and C276/C289. R281 provides a ligand contact to xyloglucan.

The protein belongs to the glycosyl hydrolase 16 family. XTH group 1 subfamily. In terms of processing, contains at least one intrachain disulfide bond essential for its enzymatic activity. The N-glycan consists of an (GlcNAc)2(Hex)6 oligosaccharide; not essential for its enzymatic activity.

The protein resides in the secreted. The protein localises to the cell wall. Its subcellular location is the extracellular space. It is found in the apoplast. The enzyme catalyses breaks a beta-(1-&gt;4) bond in the backbone of a xyloglucan and transfers the xyloglucanyl segment on to O-4 of the non-reducing terminal glucose residue of an acceptor, which can be a xyloglucan or an oligosaccharide of xyloglucan.. In terms of biological role, catalyzes xyloglucan endohydrolysis (XEH) and/or endotransglycosylation (XET). Cleaves and religates xyloglucan polymers, an essential constituent of the primary cell wall, and thereby participates in cell wall construction of growing tissues. In Brassica oleracea var. botrytis (Cauliflower), this protein is Xyloglucan endotransglucosylase/hydrolase (XET16A).